The primary structure comprises 163 residues: Transcription elongation factor GreB (163 aa).

The protein belongs to the GreA/GreB family. GreB subfamily.

Necessary for efficient RNA polymerase transcription elongation past template-encoded arresting sites. The arresting sites in DNA have the property of trapping a certain fraction of elongating RNA polymerases that pass through, resulting in locked ternary complexes. Cleavage of the nascent transcript by cleavage factors such as GreA or GreB allows the resumption of elongation from the new 3'terminus. GreB releases sequences of up to 9 nucleotides in length. In Vibrio parahaemolyticus serotype O3:K6 (strain RIMD 2210633), this protein is Transcription elongation factor GreB.